A 250-amino-acid chain; its full sequence is GTP cyclohydrolase 1 type 2 homolog (250 aa).

Residues His63, His64, Asp100, His218, and Glu222 each contribute to the a divalent metal cation site.

It belongs to the GTP cyclohydrolase I type 2/NIF3 family. As to quaternary structure, homohexamer.

The sequence is that of GTP cyclohydrolase 1 type 2 homolog from Pyrococcus horikoshii (strain ATCC 700860 / DSM 12428 / JCM 9974 / NBRC 100139 / OT-3).